Reading from the N-terminus, the 134-residue chain is Large ribosomal subunit protein bL17 (134 aa).

It belongs to the bacterial ribosomal protein bL17 family. Part of the 50S ribosomal subunit. Contacts protein L32.

This is Large ribosomal subunit protein bL17 from Thioalkalivibrio sulfidiphilus (strain HL-EbGR7).